The primary structure comprises 101 residues: Small ribosomal subunit protein uS14 (101 aa).

The protein belongs to the universal ribosomal protein uS14 family. Part of the 30S ribosomal subunit. Contacts proteins S3 and S10.

Its function is as follows. Binds 16S rRNA, required for the assembly of 30S particles and may also be responsible for determining the conformation of the 16S rRNA at the A site. The sequence is that of Small ribosomal subunit protein uS14 from Klebsiella pneumoniae (strain 342).